Here is a 103-residue protein sequence, read N- to C-terminus: MSNQRIRIRLKSFDHRLIDQSSQEIVETAKRTGAQVCGPIPMPTRIERFNVLTSPHVNKDARDQYEIRTYKRLIDIVQPTDKTVDALMKLDLAAGVDVQIALG.

This sequence belongs to the universal ribosomal protein uS10 family. As to quaternary structure, part of the 30S ribosomal subunit.

Functionally, involved in the binding of tRNA to the ribosomes. In Acinetobacter baylyi (strain ATCC 33305 / BD413 / ADP1), this protein is Small ribosomal subunit protein uS10.